Here is a 538-residue protein sequence, read N- to C-terminus: MLIPEPILAHFPWLSLSIFFPIVGALIVPFIPDKGEGKEVRWYALIIALITFLITVAAYFKGFDPSQEGLQLYEKVSWLPDLGLTWSVGADGLSMPLILLTSFITSLAVLAAWPVSYKPKLFFFLILAMDGGQIAVFAVQDMLLFFLAWELELFPVYLFLAIWGGKKRQYAATKFIIYTAGSSLFILLAGLAMGFFQGGGMPDFGYTHLAQQNFGKGFQLLCYSGLLIAFGVKLPIVPLHTWLPDAHGEATAPVHMLLAGILLKMGGYALLRFNAQLLPDAHAQFAPLLIVLGVVNIIYAALTSFAQRNLKRKIAYSSISHMGFVLIGIGSFSSLGTSGAMLQMVSHGLIGASLFFLVGATYDRTHTLQLDEMGGIGQNMRIMFALWTACAFASLALPGMSGFISELMVFVGFVTDEVYTLPFRIVVASLAAIGVILTPIYLLSMLREIFFGKENAKLISKAKLVDAEPREIYIIACLLVPIIGIGLYPKIMTDTYISSIDGLVKRDLLAVERIRSDQTTIISNSNLSIGTIEAPLLD.

The next 14 helical transmembrane spans lie at 11-31 (FPWLSLSIFFPIVGALIVPFI), 43-63 (YALIIALITFLITVAAYFKGF), 95-115 (MPLILLTSFITSLAVLAAWPV), 119-139 (PKLFFFLILAMDGGQIAVFAV), 143-163 (LLFFLAWELELFPVYLFLAIW), 175-195 (FIIYTAGSSLFILLAGLAMGF), 217-237 (GFQLLCYSGLLIAFGVKLPIV), 251-271 (TAPVHMLLAGILLKMGGYALL), 285-305 (FAPLLIVLGVVNIIYAALTSF), 314-334 (IAYSSISHMGFVLIGIGSFSS), 340-360 (AMLQMVSHGLIGASLFFLVGA), 382-404 (IMFALWTACAFASLALPGMSGFI), 425-445 (IVVASLAAIGVILTPIYLLSM), and 472-492 (IYIIACLLVPIIGIGLYPKIM).

The protein belongs to the complex I subunit 4 family.

Its subcellular location is the cellular thylakoid membrane. The enzyme catalyses a plastoquinone + NADH + (n+1) H(+)(in) = a plastoquinol + NAD(+) + n H(+)(out). The catalysed reaction is a plastoquinone + NADPH + (n+1) H(+)(in) = a plastoquinol + NADP(+) + n H(+)(out). Functionally, NDH-1 shuttles electrons from NAD(P)H, via FMN and iron-sulfur (Fe-S) centers, to quinones in the respiratory chain. The immediate electron acceptor for the enzyme in this species is believed to be plastoquinone. Couples the redox reaction to proton translocation (for every two electrons transferred, four hydrogen ions are translocated across the cytoplasmic membrane), and thus conserves the redox energy in a proton gradient. This chain is NAD(P)H-quinone oxidoreductase chain 4, found in Prochlorococcus marinus (strain NATL2A).